Reading from the N-terminus, the 137-residue chain is Putative FERT-1 protein (137 aa).

The chain is Putative FERT-1 protein (FERT-1) from Ascaris suum (Pig roundworm).